Here is a 763-residue protein sequence, read N- to C-terminus: Eukaryotic translation initiation factor 3 subunit B (763 aa).

A sufficient for interaction with HCR1 and TIF32 region spans residues 1–136; sequence MKNFLPRTLK…LFVECGSMND (136 aa). The tract at residues 28–261 is sufficient for interaction with PIC8; that stretch reads RNTQLKRSKI…GVTAWGGPNF (234 aa). The residue at position 61 (Ser61) is a Phosphoserine. Position 67 is a phosphotyrosine (Tyr67). The 86-residue stretch at 77–162 folds into the RRM domain; sequence QYIVVNGAPV…HRLFLYTMKD (86 aa). WD repeat units lie at residues 228–266, 277–325, 373–416, 484–524, 544–589, and 605–650; these read RENWSTNYVRFSPKGTYLFSYHQQGVTAWGGPNFDRLRR, VSPN…LMAT, LKPS…SACT, ELKD…IRFY, IPKT…EKNI, and PTYS…VKED. Position 669 is a phosphoserine (Ser669).

The protein belongs to the eIF-3 subunit B family. The eukaryotic translation initiation factor 3 (eIF-3) core complex is composed of TIF32, PRT1, NIP1, TIF34 and TIF35. A subcomplex of TIF32, NIP1 and PRT1 mediates the interaction with eIF-1, TIF5/eIF-5 and HCR1. The factors eIF-1, eIF-2, eIF-3, TIF5/eIF-5 and methionyl-tRNAi form a multifactor complex (MFC) that may bind to the 40S ribosome.

The protein resides in the cytoplasm. RNA-binding component of the eukaryotic translation initiation factor 3 (eIF-3) complex, which is involved in protein synthesis of a specialized repertoire of mRNAs and, together with other initiation factors, stimulates binding of mRNA and methionyl-tRNAi to the 40S ribosome. The eIF-3 complex specifically targets and initiates translation of a subset of mRNAs involved in cell proliferation. This chain is Eukaryotic translation initiation factor 3 subunit B, found in Saccharomyces cerevisiae (strain ATCC 204508 / S288c) (Baker's yeast).